Consider the following 176-residue polypeptide: MTNIRKSHPLIKIVNSSFIDLPAPSNISSWWNFGSLLGICLALQILTGLFLAMHYTSDTATAFNSVTHICRDVNYGWILRYLHANGASMFFICLYLHVGRGLHYGSYMYTETWNIGVTPLFAVMATAFMGYVLPWGQMSFWGATVITNLLSAIPYIGTDLAEWIWGGFSVDKATLT.

The next 3 helical transmembrane spans lie at 33-53 (FGSLLGICLALQILTGLFLAM), 77-98 (WILRYLHANGASMFFICLYLHV), and 113-133 (WNIGVTPLFAVMATAFMGYVL). Positions 83 and 97 each coordinate heme b.

This sequence belongs to the cytochrome b family. The cytochrome bc1 complex contains 11 subunits: 3 respiratory subunits (MT-CYB, CYC1 and UQCRFS1), 2 core proteins (UQCRC1 and UQCRC2) and 6 low-molecular weight proteins (UQCRH/QCR6, UQCRB/QCR7, UQCRQ/QCR8, UQCR10/QCR9, UQCR11/QCR10 and a cleavage product of UQCRFS1). This cytochrome bc1 complex then forms a dimer. Requires heme b as cofactor.

It is found in the mitochondrion inner membrane. Component of the ubiquinol-cytochrome c reductase complex (complex III or cytochrome b-c1 complex) that is part of the mitochondrial respiratory chain. The b-c1 complex mediates electron transfer from ubiquinol to cytochrome c. Contributes to the generation of a proton gradient across the mitochondrial membrane that is then used for ATP synthesis. This is Cytochrome b (MT-CYB) from Myotis leibii (Eastern small-footed myotis).